A 2279-amino-acid polypeptide reads, in one-letter code: Zinc finger protein 318 (2279 aa).

Low complexity-rich tracts occupy residues 1-12 (MYRSSARSSVSS) and 25-39 (SGRSSGSSSGPARRS). 2 disordered regions span residues 1–140 (MYRS…PGLC) and 164–189 (RRRLSDRLGSPVDNLEDMDRDDLTDD). The tract at residues 1 to 1092 (MYRSSARSSV…THMHNKKHTQ (1092 aa)) is interaction with AR. Ser40 is modified (phosphoserine). The span at 53-67 (PARRPRSPSGHRGRR) shows a compositional bias: basic residues. Phosphoserine occurs at positions 79 and 81. Residues 110-132 (SRGESRADYARDGRGDHPGDSGS) show a composition bias toward basic and acidic residues. Residues Ser136 and Ser173 each carry the phosphoserine modification. Residues 177–188 (NLEDMDRDDLTD) are compositionally biased toward acidic residues. A Phosphotyrosine modification is found at Tyr205. 2 positions are modified to phosphoserine: Ser207 and Ser214. 2 disordered regions span residues 279-346 (TVKI…DGGG) and 397-416 (LESFSSSTSSSQDHPLYSGH). Over residues 311–333 (LDPEFRELDLARRKREEEEERSR) the composition is skewed to basic and acidic residues. Positions 315 to 343 (FRELDLARRKREEEEERSRSLSQELVGVD) form a coiled coil. 4 positions are modified to phosphoserine: Ser464, Ser472, Ser501, and Ser527. Disordered regions lie at residues 514–533 (LADSTSTQEKRRRSFPDIED) and 540–570 (GDEEEDLKAESVPKPLGSSESEVMRQKASSL). Residues Lys547, Lys553, Lys566, and Lys578 each participate in a glycyl lysine isopeptide (Lys-Gly) (interchain with G-Cter in SUMO2) cross-link. Positions 664 to 683 (FSADRRSSDPHRLESREAHH) are enriched in basic and acidic residues. A disordered region spans residues 664 to 709 (FSADRRSSDPHRLESREAHHSNTHSPEVSHPHPPSPVDPYLLTKNS). Thr842 bears the Phosphothreonine mark. Residues 876-980 (EKISDEKNRA…SELDKVAQIL (105 aa)) adopt a coiled-coil conformation. Basic and acidic residues-rich tracts occupy residues 922–941 (QQGEMLRKKRREKDGHKDPL) and 989–1012 (QKSLSDSREPTEKPGKAEKSKSPE). 2 disordered regions span residues 922-942 (QQGEMLRKKRREKDGHKDPLL) and 989-1051 (QKSL…TKQL). Phosphoserine is present on Ser1010. The span at 1013–1023 (KVSSFSNSSSN) shows a compositional bias: low complexity. Positions 1024 to 1034 (KESKVNNEKFR) are enriched in basic and acidic residues. Ser1037 is modified (phosphoserine). 2 consecutive Matrin-type zinc fingers follow at residues 1063 to 1097 (AGNHWCKDCNTICGTMFDFFTHMHNKKHTQTLDPY) and 1136 to 1166 (FYCQLCEEFLGDPISGEQHVKGHQHNEKYKK). Composition is skewed to basic and acidic residues over residues 1195-1235 (RRQS…KLED), 1242-1251 (NSPEKAENKR), 1258-1267 (QLKEEVKKES), 1279-1288 (KKPEKEEEKS), and 1296-1316 (SKEEILESSKDKEDGKTEAGK). The tract at residues 1195-1319 (RRQSELKRKL…GKTEAGKAKP (125 aa)) is disordered. 2 positions are modified to phosphoserine: Ser1243 and Ser1267. Residue Ser1420 is modified to Phosphoserine. Disordered regions lie at residues 1428–1463 (AEKSEPSHLPEQILPPPPPPPPPPPPPPPVIPHPAA), 1577–1628 (GKGA…EELH), 1702–1735 (SSFQSDTSRDISPEKSELDLGEPGPPGVEPPPQL), and 1753–1775 (ESVNQDKESQELRKSEDCRESEI). The segment covering 1440–1462 (ILPPPPPPPPPPPPPPPVIPHPA) has biased composition (pro residues). Over residues 1602–1623 (SNLSRTKSSDTSSTSPLNSSAS) the composition is skewed to low complexity. Residues 1708 to 1719 (TSRDISPEKSEL) show a composition bias toward basic and acidic residues. The residue at position 1713 (Ser1713) is a Phosphoserine. Residues 1724–1734 (PGPPGVEPPPQ) are compositionally biased toward pro residues. Residues 1768-1792 (EDCRESEIETNTELKERVKELSEGI) are a coiled coil. Phosphoserine is present on residues Ser1856, Ser1896, Ser1971, Ser2030, Ser2035, Ser2091, Ser2101, Ser2189, Ser2192, and Ser2243. Residues 2252-2279 (DNMVPQGMPEQETTVGAIQDHTESSVHN) form a disordered region.

As to quaternary structure, homodimer. Heterodimer of isoform 1 and isoform 2. Isoform 1 and isoform 2 interact with AR. In terms of tissue distribution, expressed in endocrine tissue.

It localises to the nucleus. Functionally, acts as a transcriptional corepressor for AR-mediated transactivation function. May act as a transcriptional regulator during spermatogenesis and, in particular, during meiotic division. Its function is as follows. Acts as a transcriptional coactivator for AR-mediated transactivation function. May act as a transcriptional regulator during spermatogenesis and, in particular, during meiotic division. The sequence is that of Zinc finger protein 318 (ZNF318) from Homo sapiens (Human).